Reading from the N-terminus, the 346-residue chain is MSIVSISYNQEEYIREALDGFAAQRTEFPVEVIIADDASTDATPRIIGEYAARYPQLFRPILRQTNIGVHANFKDVLSAARGEYLALCEGDDYWTDPLKLSKQVKYLDRHPETTVCFHPVRVIYEDGAKDSEFPPLSWRRDLSVDALLARNFIQTNSVVYRRQPSYDDIPANVMPIDWYLHVRHAVGGEIAMLPETMAVYRRHAHGIWHSAYTDRRKFWETRGHGMAATLEAMLDLVHGHREREAIVGEVSAWVLREIGKTPGRQGRALLLKSIADHPRMTMLSLQHRWAQTPWRRFKRRLSTELSSLAALAYATRRRALEGRDGGYRETTSPPTGRGRNVRGSHA.

A disordered region spans residues 322 to 346; it reads GRDGGYRETTSPPTGRGRNVRGSHA.

This is an uncharacterized protein from Mycobacterium tuberculosis (strain CDC 1551 / Oshkosh).